We begin with the raw amino-acid sequence, 277 residues long: Phosphate import ATP-binding protein PstB (277 aa).

An ABC transporter domain is found at 31 to 272 (IEVPGLSLFY…PAKKQTEDYI (242 aa)). 63-70 (GPSGCGKS) contacts ATP.

This sequence belongs to the ABC transporter superfamily. Phosphate importer (TC 3.A.1.7) family. In terms of assembly, the complex is composed of two ATP-binding proteins (PstB), two transmembrane proteins (PstC and PstA) and a solute-binding protein (PstS).

It localises to the cell inner membrane. It catalyses the reaction phosphate(out) + ATP + H2O = ADP + 2 phosphate(in) + H(+). Part of the ABC transporter complex PstSACB involved in phosphate import. Responsible for energy coupling to the transport system. The chain is Phosphate import ATP-binding protein PstB from Pseudomonas fluorescens (strain Pf0-1).